The following is a 310-amino-acid chain: p-hydroxybenzoic acid efflux pump subunit AaeA (310 aa).

A helical transmembrane segment spans residues alanine 12–tyrosine 32.

The protein belongs to the membrane fusion protein (MFP) (TC 8.A.1) family.

It localises to the cell inner membrane. Functionally, forms an efflux pump with AaeB. The protein is p-hydroxybenzoic acid efflux pump subunit AaeA of Salmonella heidelberg (strain SL476).